A 685-amino-acid polypeptide reads, in one-letter code: Sodium-dependent phosphate transporter 1 (685 aa).

6 helical membrane passes run 25–45 (FLWM…SVGA), 66–86 (ACIL…AKVS), 106–126 (LMAG…AASF), 162–182 (IVLS…LLFY), 201–221 (ALPI…MYSG), and 234–254 (GIIL…WFFV). The segment covering 482-492 (VEAEEQEEGSI) has biased composition (acidic residues). The interval 482–513 (VEAEEQEEGSIEDVATDRKSSSSSLEERHDQD) is disordered. Basic and acidic residues predominate over residues 496–513 (ATDRKSSSSSLEERHDQD). The next 4 membrane-spanning stretches (helical) occupy residues 517-537 (VSLL…FAHG), 565-585 (ATPI…LWVW), 606-626 (FSIE…GLPI), and 656-676 (IFLA…AIMA).

It belongs to the inorganic phosphate transporter (PiT) (TC 2.A.20) family.

The protein localises to the cell membrane. The catalysed reaction is 2 Na(+)(out) + phosphate(out) = 2 Na(+)(in) + phosphate(in). Functionally, sodium-phosphate symporter which preferentially transports the monovalent form of phosphate with a stoichiometry of two sodium ions per phosphate ion. The chain is Sodium-dependent phosphate transporter 1 (slc20a1) from Xenopus tropicalis (Western clawed frog).